The primary structure comprises 1088 residues: Adenylate-forming reductase Nps10 (1088 aa).

Residues 1–22 (MSSVSIQIPLPTPPPTQAHNSQ) are disordered. The interval 38–451 (FDWHSKNSPN…KIFGRTDDQI (414 aa)) is adenylation (A) domain. AMP is bound by residues His261, 357–358 (NL), Thr362, and 443–446 (IFGR). Positions 586 to 668 (AWDSAKTLGF…SLASFVSSVA (83 aa)) constitute a Carrier domain. Ser621 is modified (O-(pantetheine 4'-phosphoryl)serine). The segment at 712–951 (LTGSTGALGS…IPVNVAAAAI (240 aa)) is reductase (R) domain. NADP(+) contacts are provided by residues 716–719 (TGAL), 804–806 (NAW), Tyr875, and Lys879.

It belongs to the adenylate-forming reductase family.

In terms of biological role, adenylate-forming reductase, a natural product biosynthesis enzyme that resembles non-ribosomal peptide synthetases, yet serves to modify one substrate, rather than to condense two or more building blocks. The A-domain preferentially accepts phenylpyruvic acid and benzoic acid as substrate. The natural product of the enzyme is not yet known. The chain is Adenylate-forming reductase Nps10 from Heterobasidion annosum (Root rot fungus).